Here is a 343-residue protein sequence, read N- to C-terminus: L-threonine 3-dehydrogenase (343 aa).

Cysteine 38 is a Zn(2+) binding site. Residues threonine 40 and histidine 43 each act as charge relay system in the active site. Positions 63, 64, 93, 96, 99, and 107 each coordinate Zn(2+). NAD(+) contacts are provided by residues isoleucine 175, aspartate 195, arginine 200, 262–264, and 286–287; these read LGL and IY.

Belongs to the zinc-containing alcohol dehydrogenase family. As to quaternary structure, homotetramer. It depends on Zn(2+) as a cofactor.

Its subcellular location is the cytoplasm. It carries out the reaction L-threonine + NAD(+) = (2S)-2-amino-3-oxobutanoate + NADH + H(+). It functions in the pathway amino-acid degradation; L-threonine degradation via oxydo-reductase pathway; glycine from L-threonine: step 1/2. In terms of biological role, catalyzes the NAD(+)-dependent oxidation of L-threonine to 2-amino-3-ketobutyrate. This chain is L-threonine 3-dehydrogenase, found in Saccharopolyspora erythraea (strain ATCC 11635 / DSM 40517 / JCM 4748 / NBRC 13426 / NCIMB 8594 / NRRL 2338).